Reading from the N-terminus, the 346-residue chain is Structure-specific endonuclease subunit SLX1 (346 aa).

Residues 22–105 form the GIY-YIG domain; sequence DFYGVYLLRS…QHPYQTRHIK (84 aa). The SLX1-type zinc finger occupies 216–306; that stretch reads CFICNETIDY…TPLQGKCLSC (91 aa).

Belongs to the SLX1 family. As to quaternary structure, forms a heterodimer with SLX4. A divalent metal cation is required as a cofactor.

The protein resides in the nucleus. Catalytic subunit of the SLX1-SLX4 structure-specific endonuclease that resolves DNA secondary structures generated during DNA repair and recombination. Has endonuclease activity towards branched DNA substrates, introducing single-strand cuts in duplex DNA close to junctions with ss-DNA. The sequence is that of Structure-specific endonuclease subunit SLX1 from Debaryomyces hansenii (strain ATCC 36239 / CBS 767 / BCRC 21394 / JCM 1990 / NBRC 0083 / IGC 2968) (Yeast).